The chain runs to 869 residues: H(+)/Cl(-) exchange transporter 6 (869 aa).

Residues 1-80 (MAGCRGSLCC…KKGRRYEAVK (80 aa)) are Cytoplasmic-facing. A run of 2 helical transmembrane segments spans residues 81–113 (WMVV…FGVV) and 128–150 (LSLL…LVLI). The Selectivity filter part_1 motif lies at 156-160 (GSGIP). Position 157 (Ser157) interacts with chloride. An intramembrane region (helical) is located at residues 159-166 (IPEVKCYL). A run of 2 helical transmembrane segments spans residues 176-194 (RLRT…VAGG) and 200-217 (EGPM…LPQF). The Selectivity filter part_2 motif lies at 198-202 (EKEGP). Intramembrane regions (helical) lie at residues 241–253 (FVSA…VAAA) and 257–265 (PIGGTLFSL). 3 helical membrane passes run 277–294 (TWKV…LNFF), 335–364 (GFFV…YRMR), and 371–392 (KLVR…VFVA). 3 N-linked (GlcNAc...) asparagine glycosylation sites follow: Asn410, Asn422, and Asn432. 2 helical membrane-spanning segments follow: residues 462–481 (PVTL…WTYG) and 487–511 (GLFV…KSYI). The short motif at 487-491 (GLFVP) is the Selectivity filter part_3 element. Chloride is bound at residue Phe489. An intramembrane region (helical) is located at residues 519-533 (GTFALIGAAAFLGGV). Residues 534 to 536 (VRM) constitute an intramembrane region (note=Loop between two helices). The helical intramembrane region spans 537-548 (TISLTVILIEST). Residues 549-552 (NEIT) constitute an intramembrane region (note=Loop between two helices). A helical transmembrane segment spans residues 553–571 (YGLPIMVTLMVAKWTGDFF). Over 572–869 (NKGIYDIHVG…ARLRQHYQTI (298 aa)) the chain is Cytoplasmic. Residue Tyr576 coordinates chloride. A CBS 1 domain is found at 605–662 (MEPNLTYVYPHTRIQSLVSILRTTVHHAFPVVTENRGNEKEFMKGNQLISNNIKFKKS). 630–632 (HHA) provides a ligand contact to ATP. Ser773 carries the post-translational modification Phosphoserine. Residues 807-868 (MNPSPFTVSP…QARLRQHYQT (62 aa)) form the CBS 2 domain. 849–852 (TRHN) provides a ligand contact to ATP.

Belongs to the chloride channel (TC 2.A.49) family. ClC-6/CLCN6 subfamily. In terms of processing, N-glycosylated on several asparagine residues. In terms of tissue distribution, testis, ovary, small intestine, brain and skeletal muscle. Low level expression in aortic and coronary vascular smooth muscle cells, and aortic endothelial cells. Isoform 3 is only detected in kidney.

The protein resides in the late endosome membrane. The catalysed reaction is 2 chloride(in) + H(+)(out) = 2 chloride(out) + H(+)(in). In terms of biological role, voltage-gated channel mediating the exchange of chloride ions against protons. Functions as antiporter and contributes to the acidification of the late endosome lumen. The CLC channel family contains both chloride channels and proton-coupled anion transporters that exchange chloride or another anion for protons. The presence of conserved gating glutamate residues is typical for family members that function as antiporters. The chain is H(+)/Cl(-) exchange transporter 6 from Homo sapiens (Human).